The following is a 464-amino-acid chain: Trigger factor (464 aa).

In terms of domain architecture, PPIase FKBP-type spans 166-245 (GDFLTIDITA…VKAVKERELP (80 aa)). The segment at 426-464 (FVRPGGEEEAPAAEVTEADTAEGEATEVPAEDEKAEAKA) is disordered. Residues 432 to 455 (EEEAPAAEVTEADTAEGEATEVPA) are compositionally biased toward acidic residues.

Belongs to the FKBP-type PPIase family. Tig subfamily.

It is found in the cytoplasm. The enzyme catalyses [protein]-peptidylproline (omega=180) = [protein]-peptidylproline (omega=0). Its function is as follows. Involved in protein export. Acts as a chaperone by maintaining the newly synthesized protein in an open conformation. Functions as a peptidyl-prolyl cis-trans isomerase. The protein is Trigger factor of Pseudarthrobacter chlorophenolicus (strain ATCC 700700 / DSM 12829 / CIP 107037 / JCM 12360 / KCTC 9906 / NCIMB 13794 / A6) (Arthrobacter chlorophenolicus).